A 131-amino-acid polypeptide reads, in one-letter code: Large ribosomal subunit protein bL19 (131 aa).

Positions 1–11 (MEETMNNQEAP) are enriched in polar residues. The segment at 1-20 (MEETMNNQEAPETSEEETVA) is disordered.

It belongs to the bacterial ribosomal protein bL19 family.

This protein is located at the 30S-50S ribosomal subunit interface and may play a role in the structure and function of the aminoacyl-tRNA binding site. The polypeptide is Large ribosomal subunit protein bL19 (Dehalococcoides mccartyi (strain ATCC BAA-2100 / JCM 16839 / KCTC 5957 / BAV1)).